The sequence spans 358 residues: Nitric oxide synthase oxygenase (358 aa).

Cys-62 lines the heme pocket.

Belongs to the NOS family. Bacterial NOS oxygenase subfamily. Homodimer. Requires heme as cofactor. (6S)-5,6,7,8-tetrahydrofolate is required as a cofactor.

It catalyses the reaction 3 reduced [flavodoxin] + 2 L-arginine + 4 O2 = 3 oxidized [flavodoxin] + 2 L-citrulline + 2 nitric oxide + 4 H2O + 5 H(+). Catalyzes the production of nitric oxide. This is Nitric oxide synthase oxygenase (nos) from Staphylococcus aureus (strain COL).